Reading from the N-terminus, the 259-residue chain is MFFVLSPAKNLNEKDPAPVSEFTQPDLLAESDILMQQLRELAPQQIAELMHVSDKIALLNAQRNAEWNTPFTPENAKQAVFMFNGDVYEGMDANTLNTDQIQYLQGRVRLLSGLYGLLRPLDLIQPYRLEMGTAFANLRGKNLYEFWGDIITNLLNDTLAQAGSNTLVNLASQEYFKSVNTKKLRARLITPIFKDEKNGKYKIISFYAKRARGLMVRYAAEHNITDPEMLKNFNYEGYAFNDAASNESEWVFMRSEQIK.

Belongs to the UPF0246 family.

The sequence is that of UPF0246 protein NMA1114 from Neisseria meningitidis serogroup A / serotype 4A (strain DSM 15465 / Z2491).